Here is a 495-residue protein sequence, read N- to C-terminus: Aspartyl/glutamyl-tRNA(Asn/Gln) amidotransferase subunit B (495 aa).

Belongs to the GatB/GatE family. GatB subfamily. Heterotrimer of A, B and C subunits.

The enzyme catalyses L-glutamyl-tRNA(Gln) + L-glutamine + ATP + H2O = L-glutaminyl-tRNA(Gln) + L-glutamate + ADP + phosphate + H(+). It catalyses the reaction L-aspartyl-tRNA(Asn) + L-glutamine + ATP + H2O = L-asparaginyl-tRNA(Asn) + L-glutamate + ADP + phosphate + 2 H(+). Allows the formation of correctly charged Asn-tRNA(Asn) or Gln-tRNA(Gln) through the transamidation of misacylated Asp-tRNA(Asn) or Glu-tRNA(Gln) in organisms which lack either or both of asparaginyl-tRNA or glutaminyl-tRNA synthetases. The reaction takes place in the presence of glutamine and ATP through an activated phospho-Asp-tRNA(Asn) or phospho-Glu-tRNA(Gln). The polypeptide is Aspartyl/glutamyl-tRNA(Asn/Gln) amidotransferase subunit B (Methanosarcina barkeri (strain Fusaro / DSM 804)).